A 240-amino-acid polypeptide reads, in one-letter code: Ubiquinone biosynthesis O-methyltransferase (240 aa).

Residues Arg36, Gly60, Asp81, and Leu123 each coordinate S-adenosyl-L-methionine.

It belongs to the methyltransferase superfamily. UbiG/COQ3 family.

It catalyses the reaction a 3-demethylubiquinol + S-adenosyl-L-methionine = a ubiquinol + S-adenosyl-L-homocysteine + H(+). The enzyme catalyses a 3-(all-trans-polyprenyl)benzene-1,2-diol + S-adenosyl-L-methionine = a 2-methoxy-6-(all-trans-polyprenyl)phenol + S-adenosyl-L-homocysteine + H(+). It participates in cofactor biosynthesis; ubiquinone biosynthesis. Its function is as follows. O-methyltransferase that catalyzes the 2 O-methylation steps in the ubiquinone biosynthetic pathway. In Rickettsia bellii (strain OSU 85-389), this protein is Ubiquinone biosynthesis O-methyltransferase.